We begin with the raw amino-acid sequence, 146 residues long: Large ribosomal subunit protein bL19 (146 aa).

The protein belongs to the bacterial ribosomal protein bL19 family.

Functionally, this protein is located at the 30S-50S ribosomal subunit interface and may play a role in the structure and function of the aminoacyl-tRNA binding site. This is Large ribosomal subunit protein bL19 from Bartonella bacilliformis (strain ATCC 35685 / KC583 / Herrer 020/F12,63).